We begin with the raw amino-acid sequence, 231 residues long: Putative cobalt transport protein CbiM 1 (231 aa).

The next 6 membrane-spanning stretches (helical) occupy residues 9–29, 41–61, 74–94, 107–127, 135–155, and 181–201; these read PGPW…YGIF, VLPL…LKLP, GMAV…IVLL, TFGA…YAIY, VNFY…TYVV, and VFAI…TLLF.

This sequence belongs to the CbiM family. As to quaternary structure, forms an energy-coupling factor (ECF) transporter complex composed of an ATP-binding protein (A component, CbiO), a transmembrane protein (T component, CbiQ) and 2 possible substrate-capture proteins (S components, CbiM and CbiN) of unknown stoichimetry.

The protein resides in the cell membrane. Its pathway is cofactor biosynthesis; adenosylcobalamin biosynthesis. Functionally, part of the energy-coupling factor (ECF) transporter complex CbiMNOQ involved in cobalt import. The polypeptide is Putative cobalt transport protein CbiM 1 (Methanosarcina barkeri (strain Fusaro / DSM 804)).